The chain runs to 457 residues: Beta-1,4-mannosyltransferase egh (457 aa).

The next 6 membrane-spanning stretches (helical) occupy residues 8–28, 35–55, 57–77, 346–366, 378–398, and 415–435; these read LLHC…SGGI, FTLV…LYLL, FLTL…VFYN, LLGI…NIIF, VDFV…FGVI, and VLGA…AVIW.

Belongs to the glycosyltransferase 2 family.

It localises to the membrane. Its function is as follows. Glycosyltransferase with a proposed role in glycosphingolipid biosynthesis. Neurogenic protein implicated in epithelial development. Critical component of a differential oocyte-follicle cell adhesive system. The sequence is that of Beta-1,4-mannosyltransferase egh (egh) from Drosophila melanogaster (Fruit fly).